A 459-amino-acid polypeptide reads, in one-letter code: Serine protease HTRA3 (459 aa).

The N-terminal stretch at 1–23 (MQARALLPATLATLATLAVSVLA) is a signal peptide. One can recognise an IGFBP N-terminal domain in the interval 27–90 (PAAPCPARCD…ECVRGVCRCR (64 aa)). 8 cysteine pairs are disulfide-bonded: cysteine 31–cysteine 54, cysteine 35–cysteine 56, cysteine 40–cysteine 57, cysteine 45–cysteine 60, cysteine 68–cysteine 82, cysteine 76–cysteine 87, cysteine 89–cysteine 107, and cysteine 96–cysteine 132. The Kazal-like domain occupies 76–134 (CGDSLECVRGVCRCRWTHTVCGTDGHTYADVCALQAASRRALQISGTPVRQLQKGACPS). The serine protease stretch occupies residues 181–346 (GSGFIMSEAG…AIPSDRITRF (166 aa)). Catalysis depends on charge relay system residues histidine 197, aspartate 233, and serine 311. Residues 365-450 (IRMRTITPSL…EVRRGNDDLL (86 aa)) form the PDZ domain.

This sequence belongs to the peptidase S1C family. In terms of assembly, homotrimer. Interacts with TGFB1; the interaction inhibits TGFB-mediated signaling. Interacts with BMP4; the interaction inhibits BMP4-mediated signaling. Interacts with TGFB2, GDF5 and MYH9. As to expression, expressed in the ovary, essentially in granulosa cells in a follicle-stage specific manner. Highest levels found in large luteinizing granulosa cells.

Its subcellular location is the secreted. Serine protease that cleaves beta-casein/CSN2 as well as several extracellular matrix (ECM) proteoglycans such as decorin/DCN, biglycan/BGN and fibronectin/FN1. Inhibits signaling mediated by TGF-beta family proteins possibly indirectly by degradation of these ECM proteoglycans. May act as a tumor suppressor. Negatively regulates, in vitro, trophoblast invasion during placental development and may be involved in the development of the placenta in vivo. May also have a role in ovarian development, granulosa cell differentiation and luteinization. This chain is Serine protease HTRA3 (Htra3), found in Rattus norvegicus (Rat).